A 1050-amino-acid polypeptide reads, in one-letter code: Antibiotic efflux pump membrane transporter ArpB (1050 aa).

Transmembrane regions (helical) follow at residues 10–30 (IFAW…ILKL), 339–359 (GVIH…YLFL), 370–390 (MTVP…GFSI), 393–413 (LTMF…IVVV), 440–460 (GALV…AFFG), 472–492 (ITIV…TPAL), 539–559 (VPFL…FARI), 871–891 (MPAL…ALYE), 893–913 (WSIP…ALIA), 923–943 (VYFL…AILI), 972–992 (IIMT…ASGA), and 1004–1024 (VIGG…LFFV).

Belongs to the resistance-nodulation-cell division (RND) (TC 2.A.6) family.

Its subcellular location is the cell inner membrane. In terms of biological role, the inner membrane transporter component of an antibiotic efflux pump. Confers resistance to numerous structurally unrelated antibiotics such as carbenicillin, chloramphenicol, erythromycin, novobiocin, streptomycin and tetracycline. Is not involved in organic solvent efflux. This Pseudomonas putida (Arthrobacter siderocapsulatus) protein is Antibiotic efflux pump membrane transporter ArpB (arpB).